A 498-amino-acid polypeptide reads, in one-letter code: Early growth response protein 1 (498 aa).

2 disordered regions span residues 137–203 (NASP…TASI) and 287–308 (PSRMRKYPNRPSKTPPHERPYA). A compositionally biased stretch (low complexity) spans 139–163 (SPSSAPSSSPSSSSSSSQSPPLSCS). Positions 179–202 (FPNSSPELFPDQSPQPFQNASTAS) are enriched in polar residues. 3 consecutive C2H2-type zinc fingers follow at residues 307–331 (YACPVESCDRRFSRSDELTRHIRIH), 337–359 (FQCRICMRNFSRSDHLTTHIRTH), and 365–387 (FACDICGRKFARSDERKRHTKIH). The segment at 378–422 (DERKRHTKIHLRQKDKKADKATPVSVASPVSSYSPSASTSYPSPV) is disordered. The span at 382-392 (RHTKIHLRQKD) shows a compositional bias: basic residues. The span at 398 to 422 (ATPVSVASPVSSYSPSASTSYPSPV) shows a compositional bias: low complexity.

This sequence belongs to the EGR C2H2-type zinc-finger protein family.

It localises to the nucleus. Its subcellular location is the cytoplasm. Transcriptional regulator. Recognizes and binds to the DNA sequence 5'-GCG(T/G)GGGCG-3'(EGR-site) in the promoter region of target genes. Binds double-stranded target DNA, irrespective of the cytosine methylation status. Regulates the transcription of numerous target genes, and thereby plays an important role in regulating the response to growth factors, DNA damage, and ischemia. Plays a role in the regulation of cell survival, proliferation and cell death. Mediates responses to ischemia and hypoxia; regulates the expression of proteins that are involved in inflammatory processes. Plays a role in regulating the expression of circadian clock genes. This chain is Early growth response protein 1, found in Xenopus tropicalis (Western clawed frog).